The following is a 148-amino-acid chain: D-aminoacyl-tRNA deacylase (148 aa).

The Gly-cisPro motif, important for rejection of L-amino acids motif lies at glycine 137–proline 138.

This sequence belongs to the DTD family. In terms of assembly, homodimer.

Its subcellular location is the cytoplasm. The catalysed reaction is glycyl-tRNA(Ala) + H2O = tRNA(Ala) + glycine + H(+). It catalyses the reaction a D-aminoacyl-tRNA + H2O = a tRNA + a D-alpha-amino acid + H(+). Its function is as follows. An aminoacyl-tRNA editing enzyme that deacylates mischarged D-aminoacyl-tRNAs. Also deacylates mischarged glycyl-tRNA(Ala), protecting cells against glycine mischarging by AlaRS. Acts via tRNA-based rather than protein-based catalysis; rejects L-amino acids rather than detecting D-amino acids in the active site. By recycling D-aminoacyl-tRNA to D-amino acids and free tRNA molecules, this enzyme counteracts the toxicity associated with the formation of D-aminoacyl-tRNA entities in vivo and helps enforce protein L-homochirality. The polypeptide is D-aminoacyl-tRNA deacylase (Latilactobacillus sakei subsp. sakei (strain 23K) (Lactobacillus sakei subsp. sakei)).